We begin with the raw amino-acid sequence, 172 residues long: Photosystem I assembly protein Ycf3 (172 aa).

TPR repeat units follow at residues 35–68 (AFSY…EEDP), 72–105 (SYIL…NSQL), and 120–153 (GVKA…SPNN).

It belongs to the Ycf3 family.

The protein resides in the plastid. It localises to the chloroplast thylakoid membrane. Functionally, essential for the assembly of the photosystem I (PSI) complex. May act as a chaperone-like factor to guide the assembly of the PSI subunits. This chain is Photosystem I assembly protein Ycf3, found in Guillardia theta (Cryptophyte).